The following is a 124-amino-acid chain: ATP synthase epsilon chain (124 aa).

The protein belongs to the ATPase epsilon chain family. F-type ATPases have 2 components, CF(1) - the catalytic core - and CF(0) - the membrane proton channel. CF(1) has five subunits: alpha(3), beta(3), gamma(1), delta(1), epsilon(1). CF(0) has three main subunits: a, b and c.

The protein localises to the cell membrane. In terms of biological role, produces ATP from ADP in the presence of a proton gradient across the membrane. The chain is ATP synthase epsilon chain from Corynebacterium glutamicum (strain ATCC 13032 / DSM 20300 / JCM 1318 / BCRC 11384 / CCUG 27702 / LMG 3730 / NBRC 12168 / NCIMB 10025 / NRRL B-2784 / 534).